The sequence spans 156 residues: Putative pre-16S rRNA nuclease (156 aa).

The protein belongs to the YqgF nuclease family.

The protein resides in the cytoplasm. In terms of biological role, could be a nuclease involved in processing of the 5'-end of pre-16S rRNA. The chain is Putative pre-16S rRNA nuclease from Gloeobacter violaceus (strain ATCC 29082 / PCC 7421).